Reading from the N-terminus, the 142-residue chain is Large ribosomal subunit protein uL13 (142 aa).

It belongs to the universal ribosomal protein uL13 family. As to quaternary structure, part of the 50S ribosomal subunit.

Its function is as follows. This protein is one of the early assembly proteins of the 50S ribosomal subunit, although it is not seen to bind rRNA by itself. It is important during the early stages of 50S assembly. The polypeptide is Large ribosomal subunit protein uL13 (Francisella philomiragia subsp. philomiragia (strain ATCC 25017 / CCUG 19701 / FSC 153 / O#319-036)).